Here is a 173-residue protein sequence, read N- to C-terminus: RNA pyrophosphohydrolase (173 aa).

The region spanning 11–164 is the Nudix hydrolase domain; the sequence is PYRKCVGIVV…KKHVYMKVVS (154 aa). Positions 52–73 match the Nudix box motif; the sequence is GGIDEDEKPLDAAYRELYEETG.

It belongs to the Nudix hydrolase family. RppH subfamily. The cofactor is a divalent metal cation.

In terms of biological role, accelerates the degradation of transcripts by removing pyrophosphate from the 5'-end of triphosphorylated RNA, leading to a more labile monophosphorylated state that can stimulate subsequent ribonuclease cleavage. The protein is RNA pyrophosphohydrolase of Bartonella tribocorum (strain CIP 105476 / IBS 506).